We begin with the raw amino-acid sequence, 124 residues long: Putative iron-sulfur cluster insertion protein ErpA 2 (124 aa).

The iron-sulfur cluster site is built by cysteine 52, cysteine 116, and cysteine 118.

The protein belongs to the HesB/IscA family. As to quaternary structure, homodimer. Iron-sulfur cluster is required as a cofactor.

In terms of biological role, required for insertion of 4Fe-4S clusters. This Burkholderia vietnamiensis (strain G4 / LMG 22486) (Burkholderia cepacia (strain R1808)) protein is Putative iron-sulfur cluster insertion protein ErpA 2.